A 622-amino-acid polypeptide reads, in one-letter code: MSNIVLNTLRFKHPKLALLQSCSSFSDLKIIHGFLLRTHLISDVFVASRLLALCVDDSTFNKPTNLLGYAYGIFSQIQNPNLFVFNLLIRCFSTGAEPSKAFGFYTQMLKSRIWPDNITFPFLIKASSEMECVLVGEQTHSQIVRFGFQNDVYVENSLVHMYANCGFIAAAGRIFGQMGFRDVVSWTSMVAGYCKCGMVENAREMFDEMPHRNLFTWSIMINGYAKNNCFEKAIDLFEFMKREGVVANETVMVSVISSCAHLGALEFGERAYEYVVKSHMTVNLILGTALVDMFWRCGDIEKAIHVFEGLPETDSLSWSSIIKGLAVHGHAHKAMHYFSQMISLGFIPRDVTFTAVLSACSHGGLVEKGLEIYENMKKDHGIEPRLEHYGCIVDMLGRAGKLAEAENFILKMHVKPNAPILGALLGACKIYKNTEVAERVGNMLIKVKPEHSGYYVLLSNIYACAGQWDKIESLRDMMKEKLVKKPPGWSLIEIDGKINKFTMGDDQKHPEMGKIRRKWEEILGKIRLIGYKGNTGDAFFDVDEEEKESSIHMHSEKLAIAYGMMKTKPGTTIRIVKNLRVCEDCHTVTKLISEVYGRELIVRDRNRFHHFRNGVCSCRDYW.

PPR repeat units follow at residues 81 to 115, 116 to 150, 151 to 181, 182 to 212, 213 to 247, 248 to 282, 283 to 313, 314 to 348, 349 to 384, and 385 to 419; these read NLFVFNLLIRCFSTGAEPSKAFGFYTQMLKSRIWP, DNITFPFLIKASSEMECVLVGEQTHSQIVRFGFQN, DVYVENSLVHMYANCGFIAAAGRIFGQMGFR, DVVSWTSMVAGYCKCGMVENAREMFDEMPHR, NLFTWSIMINGYAKNNCFEKAIDLFEFMKREGVVA, NETVMVSVISSCAHLGALEFGERAYEYVVKSHMTV, NLILGTALVDMFWRCGDIEKAIHVFEGLPET, DSLSWSSIIKGLAVHGHAHKAMHYFSQMISLGFIP, RDVTFTAVLSACSHGGLVEKGLEIYENMKKDHGIEP, and RLEHYGCIVDMLGRAGKLAEAENFILKMHVKPNAP. The type E motif stretch occupies residues 420 to 495; the sequence is ILGALLGACK…PPGWSLIEID (76 aa). The tract at residues 496–527 is type E(+) motif; it reads GKINKFTMGDDQKHPEMGKIRRKWEEILGKIR. The segment at 528–622 is type DYW motif; it reads LIGYKGNTGD…NGVCSCRDYW (95 aa).

It belongs to the PPR family. PCMP-H subfamily.

The sequence is that of Pentatricopeptide repeat-containing protein At5g06540 (PCMP-H88) from Arabidopsis thaliana (Mouse-ear cress).